We begin with the raw amino-acid sequence, 382 residues long: MTSLRKTHPLLKIANSALIDLPTPSNISAWWNFGSLLGLCLASQIVTGLFLAMHYTSDISTAFSSVTHICRDVNYGWLVRNMHANGASFFFICLYTHIGRGLYYGSYLYKETWTVGVILLLLTMMTAFVGYVLPWGQMSFWGATVITNLLSAIPYAGQTLVQWIWGGFSVDNATLTRFFAFHFLLPFVIAAFTAIHLLFLHETGSNNPTGLNSDADKIPFHPYFSLKDLLGFTILILTLTSVALLTPNLLGDPDNFTPANPLVTPPHIKPEWYFLFAYAILRSIPNKLGGVLALLASVLILATVPFLQTSKQQALTFRPLTQLVFWTLIANIAILTWIGGMPVEYPFVSIGQLASLAYFSIFLIIIPTTGWLEDKTLKWSRT.

Helical transmembrane passes span 33–53 (FGSLLGLCLASQIVTGLFLAM), 77–98 (WLVRNMHANGASFFFICLYTHI), 113–133 (WTVGVILLLLTMMTAFVGYVL), and 178–198 (FFAFHFLLPFVIAAFTAIHLL). Heme b-binding residues include H83 and H97. Heme b contacts are provided by H182 and H196. Position 201 (H201) interacts with a ubiquinone. 4 helical membrane passes run 226–246 (LKDLLGFTILILTLTSVALLT), 288–308 (LGGVLALLASVLILATVPFLQ), 320–340 (LTQLVFWTLIANIAILTWIGG), and 347–367 (FVSIGQLASLAYFSIFLIIIP).

The protein belongs to the cytochrome b family. In terms of assembly, the cytochrome bc1 complex contains 3 respiratory subunits (MT-CYB, CYC1 and UQCRFS1), 2 core proteins (UQCRC1 and UQCRC2) and probably 6 low-molecular weight proteins. The cofactor is heme b.

The protein resides in the mitochondrion inner membrane. Functionally, component of the ubiquinol-cytochrome c reductase complex (complex III or cytochrome b-c1 complex) that is part of the mitochondrial respiratory chain. The b-c1 complex mediates electron transfer from ubiquinol to cytochrome c. Contributes to the generation of a proton gradient across the mitochondrial membrane that is then used for ATP synthesis. The protein is Cytochrome b (mt-cyb) of Sigmops gracilis (Slender fangjaw).